Consider the following 107-residue polypeptide: Iron-sulfur cluster assembly protein CyaY (107 aa).

Belongs to the frataxin family.

Involved in iron-sulfur (Fe-S) cluster assembly. May act as a regulator of Fe-S biogenesis. The polypeptide is Iron-sulfur cluster assembly protein CyaY (Yersinia intermedia).